The sequence spans 258 residues: DNA repair protein RecO (258 aa).

This sequence belongs to the RecO family.

In terms of biological role, involved in DNA repair and RecF pathway recombination. This chain is DNA repair protein RecO, found in Desulfatibacillum aliphaticivorans.